An 86-amino-acid chain; its full sequence is Putative membrane protein insertion efficiency factor (86 aa).

Positions 64-86 are disordered; sequence GVDPVPKKSSSKTSTTACGCGHS. The segment covering 70-79 has biased composition (low complexity); that stretch reads KKSSSKTSTT.

The protein belongs to the UPF0161 family.

It is found in the cell inner membrane. Functionally, could be involved in insertion of integral membrane proteins into the membrane. This chain is Putative membrane protein insertion efficiency factor, found in Janthinobacterium sp. (strain Marseille) (Minibacterium massiliensis).